The following is a 111-amino-acid chain: MKKQNIRVGDKVFILAGNDKGKEGKVLSLTEDKVVVEGVNVRIKNIKRSQQNPKGKRISIEAPIHISNVRLTIAGEPAKLSVKVTEQGRELWQRRPDGTSQLYRLVRGKKG.

Belongs to the universal ribosomal protein uL24 family. As to quaternary structure, part of the 50S ribosomal subunit.

In terms of biological role, one of two assembly initiator proteins, it binds directly to the 5'-end of the 23S rRNA, where it nucleates assembly of the 50S subunit. Its function is as follows. One of the proteins that surrounds the polypeptide exit tunnel on the outside of the subunit. The polypeptide is Large ribosomal subunit protein uL24 (Chlamydia pneumoniae (Chlamydophila pneumoniae)).